The primary structure comprises 588 residues: Intracellular maltogenic amylase (588 aa).

The Ca(2+) site is built by N149, S155, G174, and D176. Substrate is bound by residues H249 and R325. D327 serves as the catalytic Nucleophile. E356 acts as the Proton donor in catalysis. Substrate is bound by residues 422 to 423 (HD), D467, and R471.

This sequence belongs to the glycosyl hydrolase 13 family. BbmA subfamily. Monomer or homodimer; in equilibrium. Requires Ca(2+) as cofactor.

The protein localises to the cytoplasm. Hydrolyzes beta-cyclodextrin to maltose and glucose, soluble starch to maltose and glucose, and pullulan to panose with trace amounts of maltose and glucose. It is also able to hydrolyze acarbose. Can also exhibit a transglycosylation activity transferring glucose or maltose to another moiety of sugars by forming alpha-(1,6)- and alpha-(1,3)-glycosidic linkages upon the hydrolysis of substrate at concentrations of 5% or higher. The protein is Intracellular maltogenic amylase (bbmA) of Bacillus subtilis (strain 168).